The sequence spans 245 residues: MTLTASSSSRAVTNSPVVVALDYHNRDDALSFVDKIDPRDCRLKVGKEMFTLFGPQFVRELQQRGFDIFLDLKFHDIPNTAAHAVAAAADLGVWMVNVHASGGARMMTAAREALVPFGKDAPLLIAVTVLTSMEASDLADLGVTLSPADYAERLAALTQKCGLDGVVCSAQEAVRFKQVFGQEFKLVTPGIRPQGSDAGDQRRIMTPEQALAAGVDYMVIGRPVTQSVDPAQTLKAINASLQRSA.

Substrate is bound by residues Asp22, Lys44, 71-80, Thr131, Arg192, Gln201, Gly221, and Arg222; that span reads DLKFHDIPNT. Catalysis depends on Lys73, which acts as the Proton donor.

Belongs to the OMP decarboxylase family. Type 1 subfamily. As to quaternary structure, homodimer.

It catalyses the reaction orotidine 5'-phosphate + H(+) = UMP + CO2. Its pathway is pyrimidine metabolism; UMP biosynthesis via de novo pathway; UMP from orotate: step 2/2. Its function is as follows. Catalyzes the decarboxylation of orotidine 5'-monophosphate (OMP) to uridine 5'-monophosphate (UMP). The sequence is that of Orotidine 5'-phosphate decarboxylase from Escherichia coli O139:H28 (strain E24377A / ETEC).